We begin with the raw amino-acid sequence, 585 residues long: Bestrophin-1 (585 aa).

Residues 1 to 31 are Cytoplasmic-facing; the sequence is MTITYTSQVANARLGSFSRLLLCWRGSIYKL. A10 provides a ligand contact to Ca(2+). Residues 32 to 51 traverse the membrane as a helical segment; it reads LYGEFFIFLLCYYIIRFIYR. At 52–60 the chain is on the extracellular side; the sequence is LALTEEQQL. The helical transmembrane segment at 61–82 threads the bilayer; the sequence is MFEKLTLYCDSYIQLIPISFVL. Over 83-237 the chain is Cytoplasmic; the sequence is GFYVTLVVTR…DWISIPLVYT (155 aa). A helical transmembrane segment spans residues 238–255; the sequence is QVVTVAVYSFFLTCLVGR. Residues 256 to 274 are Extracellular-facing; the sequence is QFLNPAKAYPGHELDLVVP. The chain crosses the membrane as a helical span at residues 275-288; sequence VFTFLQFFFYVGWL. The Cytoplasmic portion of the chain corresponds to 289–585; sequence KVAEQLINPF…ALENRDEAHS (297 aa). Q293, N296, D301, and D304 together coordinate Ca(2+). Residues 346 to 379 are auto-inhibitory segment; it reads PYTAASAQFRRASFMGSTFNISLNKEEMEFQPNQ.

This sequence belongs to the anion channel-forming bestrophin (TC 1.A.46) family. Calcium-sensitive chloride channel subfamily. In terms of assembly, interacts with YWHAG; this interaction promotes the ligand-gated L-glutamate channel activity leading to the positive regulation of NMDA glutamate receptor activity through the L-glutamate secretion.

It is found in the cell membrane. The protein localises to the basolateral cell membrane. The enzyme catalyses chloride(in) = chloride(out). It carries out the reaction hydrogencarbonate(in) = hydrogencarbonate(out). The catalysed reaction is 4-aminobutanoate(in) = 4-aminobutanoate(out). It catalyses the reaction L-glutamate(out) = L-glutamate(in). In terms of biological role, ligand-gated anion channel that allows the movement of anions across cell membranes when activated by calcium (Ca2+). Allows the movement of chloride and hydrogencarbonate. Found in a partially open conformation leading to significantly smaller chloride movement. Upon F2R/PAR-1 activation, the sequestered calcium is released into the cytosol of astrocytes, leading to the (Ca2+)-dependent release of L-glutamate into the synaptic cleft that targets the neuronal postsynaptic GRIN2A/NMDAR receptor resulting in the synaptic plasticity regulation. Upon activation of the norepinephrine-alpha-1 adrenergic receptor signaling pathway, transports as well D-serine than L-glutamate in a (Ca2+)-dependent manner, leading to activation of adjacent NMDAR receptors and therefore regulates the heterosynaptic long-term depression and metaplasticity during initial memory acquisition. Releases the 4-aminobutanoate neurotransmitter in a (Ca2+)-dependent manner, and participates in its tonic release from cerebellar glial cells. This is Bestrophin-1 (BEST1) from Macaca fascicularis (Crab-eating macaque).